A 244-amino-acid chain; its full sequence is Ribosomal RNA large subunit methyltransferase E (244 aa).

Positions 1–23 (MATGGKKSAGRTTGSGPAGGSRN) are disordered. 5 residues coordinate S-adenosyl-L-methionine: G91, W93, D116, D132, and D156. K196 serves as the catalytic Proton acceptor.

This sequence belongs to the class I-like SAM-binding methyltransferase superfamily. RNA methyltransferase RlmE family.

Its subcellular location is the cytoplasm. It catalyses the reaction uridine(2552) in 23S rRNA + S-adenosyl-L-methionine = 2'-O-methyluridine(2552) in 23S rRNA + S-adenosyl-L-homocysteine + H(+). Its function is as follows. Specifically methylates the uridine in position 2552 of 23S rRNA at the 2'-O position of the ribose in the fully assembled 50S ribosomal subunit. In Paramagnetospirillum magneticum (strain ATCC 700264 / AMB-1) (Magnetospirillum magneticum), this protein is Ribosomal RNA large subunit methyltransferase E.